The primary structure comprises 321 residues: Lipoyl synthase (321 aa).

Cys-68, Cys-73, Cys-79, Cys-94, Cys-98, Cys-101, and Ser-308 together coordinate [4Fe-4S] cluster. A Radical SAM core domain is found at 80–297; that stretch reads FNHGTATFMI…REFAESIGFT (218 aa).

Belongs to the radical SAM superfamily. Lipoyl synthase family. Requires [4Fe-4S] cluster as cofactor.

The protein localises to the cytoplasm. It carries out the reaction [[Fe-S] cluster scaffold protein carrying a second [4Fe-4S](2+) cluster] + N(6)-octanoyl-L-lysyl-[protein] + 2 oxidized [2Fe-2S]-[ferredoxin] + 2 S-adenosyl-L-methionine + 4 H(+) = [[Fe-S] cluster scaffold protein] + N(6)-[(R)-dihydrolipoyl]-L-lysyl-[protein] + 4 Fe(3+) + 2 hydrogen sulfide + 2 5'-deoxyadenosine + 2 L-methionine + 2 reduced [2Fe-2S]-[ferredoxin]. The protein operates within protein modification; protein lipoylation via endogenous pathway; protein N(6)-(lipoyl)lysine from octanoyl-[acyl-carrier-protein]: step 2/2. Functionally, catalyzes the radical-mediated insertion of two sulfur atoms into the C-6 and C-8 positions of the octanoyl moiety bound to the lipoyl domains of lipoate-dependent enzymes, thereby converting the octanoylated domains into lipoylated derivatives. In Shewanella sediminis (strain HAW-EB3), this protein is Lipoyl synthase.